We begin with the raw amino-acid sequence, 339 residues long: UDP-N-acetylglucosamine--N-acetylmuramyl-(pentapeptide) pyrophosphoryl-undecaprenol N-acetylglucosamine transferase (339 aa).

UDP-N-acetyl-alpha-D-glucosamine-binding positions include 9 to 11 (TGG), asparagine 119, arginine 160, serine 188, and glutamine 280.

The protein belongs to the glycosyltransferase 28 family. MurG subfamily.

It is found in the cell inner membrane. The catalysed reaction is di-trans,octa-cis-undecaprenyl diphospho-N-acetyl-alpha-D-muramoyl-L-alanyl-D-glutamyl-meso-2,6-diaminopimeloyl-D-alanyl-D-alanine + UDP-N-acetyl-alpha-D-glucosamine = di-trans,octa-cis-undecaprenyl diphospho-[N-acetyl-alpha-D-glucosaminyl-(1-&gt;4)]-N-acetyl-alpha-D-muramoyl-L-alanyl-D-glutamyl-meso-2,6-diaminopimeloyl-D-alanyl-D-alanine + UDP + H(+). It functions in the pathway cell wall biogenesis; peptidoglycan biosynthesis. Its function is as follows. Cell wall formation. Catalyzes the transfer of a GlcNAc subunit on undecaprenyl-pyrophosphoryl-MurNAc-pentapeptide (lipid intermediate I) to form undecaprenyl-pyrophosphoryl-MurNAc-(pentapeptide)GlcNAc (lipid intermediate II). In Thermus thermophilus (strain ATCC BAA-163 / DSM 7039 / HB27), this protein is UDP-N-acetylglucosamine--N-acetylmuramyl-(pentapeptide) pyrophosphoryl-undecaprenol N-acetylglucosamine transferase.